Reading from the N-terminus, the 211-residue chain is Envelope protein UL45 homolog (211 aa).

Over 1–46 the chain is Intravirion; the sequence is MMSPTPEDDRDLVVVRGRLRMMDNGAEHDRERRSYTAWPHLCCGCT. A helical; Signal-anchor for type II membrane protein membrane pass occupies residues 47 to 67; the sequence is IGIILTMFVIATTLLLASLFA. At 68–211 the chain is on the virion surface side; the sequence is FSYMSLESGT…SSILSNAIMK (144 aa). N-linked (GlcNAc...) asparagine; by host glycosylation is found at Asn-96 and Asn-133.

Belongs to the herpesviridae HHV-1 UL45 family.

The protein resides in the virion membrane. The polypeptide is Envelope protein UL45 homolog (UL45H) (Gallid herpesvirus 2 (strain bc-1) (GaHV-2)).